We begin with the raw amino-acid sequence, 378 residues long: MGVKDLSKVIGDHSPNSIRLKEFKGYFGRKVAVDASMCLYQFLIAVRQDGSQLQTESGETTSHLLGMFYRTIRMIDNGIKPVYVFDGKPPQMKTSELEKRTERRTEAEKQRNDAVELGDETSVNKFEKRLVKVTKEQSEEAKRLVTLMGIPVLDAPCEAEAQCAALAKAGKVFATVSEDMDALTFGSPILLRQMIASEAKKLPVKEMNLNQVLKDFGMNMGQFVDLCILLGCDYVSTIRGIGPKKAFELIKKYECIENVLETINQTKYPIPQDWQYKEARRLFLEPDVMNCENLELVWKEPDVEGIVQFLCVEKSFNEDRVRGSLTRMQKGRQAAQQARIDSFFSVSKVVTSETTKRKNEEKNNLKKRGPSLGKKAKK.

Residues 1 to 104 (MGVKDLSKVI…SELEKRTERR (104 aa)) are N-domain. D34 lines the Mg(2+) pocket. R47 and R70 together coordinate DNA. D86 is a binding site for Mg(2+). A disordered region spans residues 90 to 113 (PQMKTSELEKRTERRTEAEKQRND). Residues 95-113 (SELEKRTERRTEAEKQRND) are compositionally biased toward basic and acidic residues. Positions 122–253 (SVNKFEKRLV…KKAFELIKKY (132 aa)) are I-domain. 4 residues coordinate Mg(2+): E158, E160, D179, and D181. E158 provides a ligand contact to DNA. G231 and D233 together coordinate DNA. D233 lines the Mg(2+) pocket. The interaction with PCNA stretch occupies residues 336-344 (QQARIDSFF). Residues 348 to 378 (KVVTSETTKRKNEEKNNLKKRGPSLGKKAKK) form a disordered region. Positions 354–364 (TTKRKNEEKNN) are enriched in basic and acidic residues. Residues 365-378 (LKKRGPSLGKKAKK) are compositionally biased toward basic residues.

Belongs to the XPG/RAD2 endonuclease family. FEN1 subfamily. Interacts with PCNA. Three molecules of FEN1 bind to one PCNA trimer with each molecule binding to one PCNA monomer. PCNA stimulates the nuclease activity without altering cleavage specificity. Mg(2+) is required as a cofactor. Post-translationally, phosphorylated. Phosphorylation upon DNA damage induces relocalization to the nuclear plasma.

Its subcellular location is the nucleus. It localises to the nucleolus. The protein localises to the nucleoplasm. The protein resides in the mitochondrion. Its function is as follows. Structure-specific nuclease with 5'-flap endonuclease and 5'-3' exonuclease activities involved in DNA replication and repair. During DNA replication, cleaves the 5'-overhanging flap structure that is generated by displacement synthesis when DNA polymerase encounters the 5'-end of a downstream Okazaki fragment. It enters the flap from the 5'-end and then tracks to cleave the flap base, leaving a nick for ligation. Also involved in the long patch base excision repair (LP-BER) pathway, by cleaving within the apurinic/apyrimidinic (AP) site-terminated flap. Acts as a genome stabilization factor that prevents flaps from equilibrating into structures that lead to duplications and deletions. Also possesses 5'-3' exonuclease activity on nicked or gapped double-stranded DNA, and exhibits RNase H activity. Also involved in replication and repair of rDNA and in repairing mitochondrial DNA. The sequence is that of Flap endonuclease 1 from Brugia malayi (Filarial nematode worm).